The sequence spans 393 residues: MKLRSIRDAEVRNKRVIVRVDFNVPLDAEGNVVDDFRIRAALPTIEYLVENGAKVILISHLGRPKGKRDKKYSLVGVAKRLAELLHKEILFAPDVVGEEVELAVNGLRSGDILLCENVRFHEEEEKNDAEFAKNIASLGEIFVNDAFSASHRAHATVEGITKFLPSYAGFLMEKEVNYLSMLTENPQRPYYLVLGGAKVSDKVALLQNLLPKVDGMVIGGAMVFTFWKAQGKEIGKSIVEDDLVGFAKELLEQATTQNKEIVLAKDFVVADENKEHVEIKAISDFGPADIGYDIGPESIKEFKNALVKARTVFWNGPLGLFEDAKFAEGTKQVGAFLADFPGTVVVGGGDTANAVREMELFEKFAHVSTGGGASLEFLEGKVLPGIAPLVVEG.

Substrate contacts are provided by residues 21–23, arginine 37, 60–63, arginine 119, and arginine 152; these read DFN and HLGR. Residues lysine 202, glycine 291, glutamate 322, and 348 to 351 each bind ATP; that span reads GGDT.

Belongs to the phosphoglycerate kinase family. In terms of assembly, monomer.

Its subcellular location is the cytoplasm. It catalyses the reaction (2R)-3-phosphoglycerate + ATP = (2R)-3-phospho-glyceroyl phosphate + ADP. It participates in carbohydrate degradation; glycolysis; pyruvate from D-glyceraldehyde 3-phosphate: step 2/5. In Coprothermobacter proteolyticus (strain ATCC 35245 / DSM 5265 / OCM 4 / BT), this protein is Phosphoglycerate kinase.